A 154-amino-acid chain; its full sequence is MTPQRKRRLVMLAALAGGVGVAVALALAALQQNINLFYSPSQIAAGEAPLHTRIRAGGLVQDGSLRRAPDSLAVQFGITDGVQQVLVRYDGILPDLFREGQGIVALGKLDAQGMLQADEVLAKHDQNYMPPEAAHALKQGAATSGGTPAAEPQP.

Residues 1–8 are Cytoplasmic-facing; it reads MTPQRKRR. A helical; Signal-anchor for type II membrane protein transmembrane segment spans residues 9–29; sequence LVMLAALAGGVGVAVALALAA. Residues 30–154 lie on the Periplasmic side of the membrane; the sequence is LQQNINLFYS…GGTPAAEPQP (125 aa). Heme contacts are provided by H124 and Y128. Residues 130-154 are disordered; it reads PPEAAHALKQGAATSGGTPAAEPQP.

It belongs to the CcmE/CycJ family.

It is found in the cell inner membrane. In terms of biological role, heme chaperone required for the biogenesis of c-type cytochromes. Transiently binds heme delivered by CcmC and transfers the heme to apo-cytochromes in a process facilitated by CcmF and CcmH. The chain is Cytochrome c-type biogenesis protein CcmE from Bordetella petrii (strain ATCC BAA-461 / DSM 12804 / CCUG 43448).